We begin with the raw amino-acid sequence, 315 residues long: Gamma-hemolysin component C (315 aa).

An N-terminal signal peptide occupies residues 1–29 (MLKNKILATTLSVSLLAPLANPLLENAKA).

It belongs to the aerolysin family. In terms of assembly, toxicity requires sequential binding and synergistic association of a class S and a class F component which form heterooligomeric complexes. HlgC (class S) associates with HlgB (class F) thus forming an CB toxin.

Functionally, toxin that seems to act by forming pores in the membrane of the cell. Has a hemolytic and a leucotoxic activity. The protein is Gamma-hemolysin component C (hlgC) of Staphylococcus aureus (strain Mu50 / ATCC 700699).